The chain runs to 162 residues: Putative 4-hydroxy-4-methyl-2-oxoglutarate aldolase (162 aa).

Substrate-binding positions include 75 to 78 (GDML) and Arg-97. Residue Asp-98 participates in a divalent metal cation binding.

Belongs to the class II aldolase/RraA-like family. In terms of assembly, homotrimer. A divalent metal cation is required as a cofactor.

The catalysed reaction is 4-hydroxy-4-methyl-2-oxoglutarate = 2 pyruvate. It catalyses the reaction oxaloacetate + H(+) = pyruvate + CO2. In terms of biological role, catalyzes the aldol cleavage of 4-hydroxy-4-methyl-2-oxoglutarate (HMG) into 2 molecules of pyruvate. Also contains a secondary oxaloacetate (OAA) decarboxylase activity due to the common pyruvate enolate transition state formed following C-C bond cleavage in the retro-aldol and decarboxylation reactions. This is Putative 4-hydroxy-4-methyl-2-oxoglutarate aldolase from Azotobacter vinelandii (strain DJ / ATCC BAA-1303).